The primary structure comprises 44 residues: Somatoliberin (44 aa).

Leu44 is modified (leucine amide).

Belongs to the glucagon family.

It localises to the secreted. In terms of biological role, GRF is released by the hypothalamus and acts on the adenohypophyse to stimulate the secretion of growth hormone. The chain is Somatoliberin (GHRH) from Sus scrofa (Pig).